The chain runs to 170 residues: Ecotin (170 aa).

The N-terminal stretch at 1–21 (MNKASVVFSGLLMAVSASAIA) is a signal peptide. Residues Cys-78 and Cys-115 are joined by a disulfide bond.

This sequence belongs to the protease inhibitor I11 (ecotin) family. As to quaternary structure, homodimer.

It localises to the periplasm. Functionally, general inhibitor of pancreatic serine proteases: inhibits chymotrypsin, trypsin, elastases, factor X, kallikrein as well as a variety of other proteases. The sequence is that of Ecotin from Serratia proteamaculans (strain 568).